The chain runs to 74 residues: DNA-directed RNA polymerase subunit omega (74 aa).

This sequence belongs to the RNA polymerase subunit omega family. In terms of assembly, the RNAP catalytic core consists of 2 alpha, 1 beta, 1 beta' and 1 omega subunit. When a sigma factor is associated with the core the holoenzyme is formed, which can initiate transcription.

The catalysed reaction is RNA(n) + a ribonucleoside 5'-triphosphate = RNA(n+1) + diphosphate. Promotes RNA polymerase assembly. Latches the N- and C-terminal regions of the beta' subunit thereby facilitating its interaction with the beta and alpha subunits. The chain is DNA-directed RNA polymerase subunit omega from Helicobacter acinonychis (strain Sheeba).